Reading from the N-terminus, the 338-residue chain is ATPase GET3 (338 aa).

33 to 40 lines the ATP pocket; it reads KGGVGKTT. Asp-62 is a catalytic residue. Glu-242 and Asn-269 together coordinate ATP. Residues Cys-280 and Cys-283 each contribute to the Zn(2+) site.

It belongs to the arsA ATPase family. Homodimer.

It is found in the cytoplasm. It localises to the endoplasmic reticulum. ATPase required for the post-translational delivery of tail-anchored (TA) proteins to the endoplasmic reticulum. Recognizes and selectively binds the transmembrane domain of TA proteins in the cytosol. This complex then targets to the endoplasmic reticulum by membrane-bound receptors, where the tail-anchored protein is released for insertion. This process is regulated by ATP binding and hydrolysis. ATP binding drives the homodimer towards the closed dimer state, facilitating recognition of newly synthesized TA membrane proteins. ATP hydrolysis is required for insertion. Subsequently, the homodimer reverts towards the open dimer state, lowering its affinity for the membrane-bound receptor, and returning it to the cytosol to initiate a new round of targeting. The protein is ATPase GET3 of Uncinocarpus reesii (strain UAMH 1704).